Consider the following 951-residue polypeptide: Pentatricopeptide repeat-containing protein At4g19220, mitochondrial (951 aa).

A mitochondrion-targeting transit peptide spans 1–63 (MLLVMVRSST…RHFTSSVLSP (63 aa)). PPR repeat units lie at residues 121 to 151 (DLATSSKLLTFYGRTGELVSSSCLFDELKEK), 152 to 186 (DVIVWNSMITALNQNGRYIAAVGLFIEMIHKGNEF), 187 to 221 (DSTTLLLAASALSSLHLSRKCSMLHCLAIETGLVG), 222 to 252 (DSSLCNALMNLYAKGENLSSAECVFTHMEHR), 253 to 287 (DIVSWNTIMTKCLANGHPRKSLQYFKSMTGSGQEA), 288 to 322 (DTVTFSCVISACSSIEELTLGESLHGLVIKSGYSP), 325 to 355 (HVSVGNSIISMYSKCGDTEAAETVFEELVCR), 356 to 386 (DVISSNAILNGFAANGMFEEAFGILNQMQSV), 392 to 426 (DIATVVSITSICGDLSFSREGRAVHGYTVRMEMQS), 428 to 458 (ALEVINSVIDMYGKCGLTTQAELLFKTTTHR), 459 to 489 (DLVSWNSMISAFSQNGFTHKAKNLFKEVVSE), 496 to 530 (SLSTVLAILTSCDSSDSLIFGKSVHCWLQKLGFGD), 531 to 561 (NMLSANSVINMYIGCRDLTSAFLRLETMSET), 563 to 597 (DLTSWNSVISGCASSGHHLESLRAFQAMSREGKIR), 599 to 629 (DLITLLGTISASGNLGLVLQGRCFHGLAIKS), 634 to 668 (DTQLQNTLITMYGRCKDIESAVKVFGLISDPNLCS), 669 to 695 (WNCVISALSQNKAGREVFQLFRNLKLE), 697 to 731 (NEITFVGLLSASTQLGSTSYGMQAHCHLIRRGFQA), 732 to 762 (NPFVSAALVDMYSSCGMLETGMKVFRNSGVN), 763 to 793 (SISAWNSVISAHGFHGMGEKAMELFKELSSN), 799 to 829 (NKSSFISLLSACSHSGFIDEGLSYYKQMEEK), and 835 to 865 (VTEHRVWIVDMLGRAGKLREAYEFITGIGEP). The interval 870–945 (VWGALLSACN…LPGYSVIDVR (76 aa)) is type E motif.

This sequence belongs to the PPR family. PCMP-E subfamily.

The protein localises to the mitochondrion. This Arabidopsis thaliana (Mouse-ear cress) protein is Pentatricopeptide repeat-containing protein At4g19220, mitochondrial (PCMP-E2).